Here is a 548-residue protein sequence, read N- to C-terminus: Stretch-activated cation channel MID1 (548 aa).

A signal peptide spans 1 to 20; sequence MIVWQALFVVYCLFTTSIHG. Topologically, residues 21–341 are extracellular; sequence LFQDFNPFAN…YLTKKISNGD (321 aa). N-linked (GlcNAc...) asparagine glycans are attached at residues Asn-32, Asn-70, Asn-112, Asn-125, Asn-159, Asn-175, Asn-228, Asn-238, Asn-265, Asn-282, Asn-285, Asn-291, and Asn-324. A helical membrane pass occupies residues 342-358; sequence GLSSVGGILFSHVYFTT. The Cytoplasmic segment spans residues 359–548; sequence RSTDVCSLIF…LMVIHPLDDT (190 aa).

As to quaternary structure, forms an oligomer with a molecular mass of 200 kDa by disulfide bonds. Interacts with CCH1 to form a Ca(2+) influx channel. In terms of processing, N-glycosylated.

It localises to the cell membrane. In terms of biological role, calcium-permeable, cation-selective stretch-activated channel (SAC) that functions together with CCH1 to mediate calcium entry into cells. Required during mating. Together with CCH1, essential for tolerance to iron stress, which leads to an increased oxidative poise, and to cold stress. This chain is Stretch-activated cation channel MID1 (MID1), found in Saccharomyces cerevisiae (strain ATCC 204508 / S288c) (Baker's yeast).